A 472-amino-acid polypeptide reads, in one-letter code: Probable endopolygalacturonase D (472 aa).

Residues 1–16 form the signal peptide; sequence MKRGALLVPFVPLALA. An N-linked (GlcNAc...) asparagine glycan is attached at asparagine 24. Cysteine 129 and cysteine 144 form a disulfide bridge. PbH1 repeat units lie at residues 236 to 258, 259 to 297, and 298 to 319; these read MYYSRIENLNIQNWPVHCFDIEH, TENLIISGITLDNSAGDAPNSASGSKPAAHNSDGFDIKS, and STNLTLQNSWVHNQDDCVAVSS. A glycan (N-linked (GlcNAc...) asparagine) is linked at asparagine 300. The Proton donor role is filled by aspartate 312. Cysteine 314 and cysteine 330 are oxidised to a cystine. Histidine 334 is an active-site residue. 4 PbH1 repeats span residues 349–370, 378–400, 412–433, and 444–467; these read VDGVTFSNSQVINSSNGCRIKS, VSNIRYENITVSGITDYGIDIQQ, TNGVKIENITFVDVTGTMSDGK, and CSNFVFENVGITGGSGDSCNYPTD. N-linked (GlcNAc...) asparagine glycosylation is found at asparagine 361, asparagine 385, and asparagine 419. 2 disulfides stabilise this stretch: cysteine 439–cysteine 444 and cysteine 462–cysteine 469.

This sequence belongs to the glycosyl hydrolase 28 family.

The protein localises to the secreted. It catalyses the reaction (1,4-alpha-D-galacturonosyl)n+m + H2O = (1,4-alpha-D-galacturonosyl)n + (1,4-alpha-D-galacturonosyl)m.. Involved in maceration and soft-rotting of plant tissue. Hydrolyzes the 1,4-alpha glycosidic bonds of de-esterified pectate in the smooth region of the plant cell wall. In Neosartorya fischeri (strain ATCC 1020 / DSM 3700 / CBS 544.65 / FGSC A1164 / JCM 1740 / NRRL 181 / WB 181) (Aspergillus fischerianus), this protein is Probable endopolygalacturonase D (pgaD).